The chain runs to 383 residues: Putative type I specificity subunit S.MgeORF438P (383 aa).

The TRD1 stretch occupies residues 1 to 142 (MTPKLKLNNN…KELEIPFTSN (142 aa)). Residues 143 to 182 (KNEQHAIANTLSVFDERLENLASLIEINRKLRDEYAHKLF) are conserved region 1. Residues 143–182 (KNEQHAIANTLSVFDERLENLASLIEINRKLRDEYAHKLF) are a coiled coil. Positions 183-330 (SLDEAFLSHW…GEIKVPYVKS (148 aa)) are TRD2. Residues 331–370 (FQLQRKAGKIVFLLDQKLDQYKKELSSLTVIRDTLLKKLF) are conserved region 2. The stretch at 331 to 370 (FQLQRKAGKIVFLLDQKLDQYKKELSSLTVIRDTLLKKLF) forms a coiled coil.

This sequence belongs to the type-I restriction system S methylase family.

In terms of biological role, the specificity (S) subunit of a type I restriction enzyme; this subunit dictates DNA sequence specificity. This bacterium does not encode the associated endonuclease or methylase subunits. The polypeptide is Putative type I specificity subunit S.MgeORF438P (Mycoplasma genitalium (strain ATCC 33530 / DSM 19775 / NCTC 10195 / G37) (Mycoplasmoides genitalium)).